A 61-amino-acid chain; its full sequence is Large ribosomal subunit protein eL24 (61 aa).

Zn(2+) is bound by residues Cys-7, Cys-10, Cys-33, and Cys-37. A C4-type zinc finger spans residues 7 to 37 (CSFCGHEIPPGTGLMYVRNDGTILWFCSSKC).

This sequence belongs to the eukaryotic ribosomal protein eL24 family. Part of the 50S ribosomal subunit. Forms a cluster with proteins L3 and L14. Requires Zn(2+) as cofactor.

Its function is as follows. Binds to the 23S rRNA. The sequence is that of Large ribosomal subunit protein eL24 from Saccharolobus islandicus (strain Y.N.15.51 / Yellowstone #2) (Sulfolobus islandicus).